Here is a 234-residue protein sequence, read N- to C-terminus: UPF0758 protein Smlt0399 (234 aa).

One can recognise an MPN domain in the interval 103–225 (VGNNPAAVGR…PVSFAERGLL (123 aa)). Zn(2+)-binding residues include H174, H176, and D187. Residues 174–187 (HNHPSGDPEPSSAD) carry the JAMM motif motif.

The protein belongs to the UPF0758 family.

The polypeptide is UPF0758 protein Smlt0399 (Stenotrophomonas maltophilia (strain K279a)).